We begin with the raw amino-acid sequence, 113 residues long: Protein Asterix (113 aa).

A helical membrane pass occupies residues 81–97 (IVSSFMLSVSAVVMSYL).

The protein belongs to the Asterix family.

Its subcellular location is the membrane. This Caenorhabditis elegans protein is Protein Asterix.